A 90-amino-acid chain; its full sequence is Small ribosomal subunit protein uS15 (90 aa).

Belongs to the universal ribosomal protein uS15 family. In terms of assembly, part of the 30S ribosomal subunit. Forms a bridge to the 50S subunit in the 70S ribosome, contacting the 23S rRNA.

Functionally, one of the primary rRNA binding proteins, it binds directly to 16S rRNA where it helps nucleate assembly of the platform of the 30S subunit by binding and bridging several RNA helices of the 16S rRNA. In terms of biological role, forms an intersubunit bridge (bridge B4) with the 23S rRNA of the 50S subunit in the ribosome. The chain is Small ribosomal subunit protein uS15 from Wolinella succinogenes (strain ATCC 29543 / DSM 1740 / CCUG 13145 / JCM 31913 / LMG 7466 / NCTC 11488 / FDC 602W) (Vibrio succinogenes).